The sequence spans 195 residues: Thymidylate kinase (195 aa).

7-14 serves as a coordination point for ATP; the sequence is GIDGVGKS.

This sequence belongs to the thymidylate kinase family.

The catalysed reaction is dTMP + ATP = dTDP + ADP. In terms of biological role, phosphorylation of dTMP to form dTDP in both de novo and salvage pathways of dTTP synthesis. The protein is Thymidylate kinase of Campylobacter hominis (strain ATCC BAA-381 / DSM 21671 / CCUG 45161 / LMG 19568 / NCTC 13146 / CH001A).